The chain runs to 162 residues: Probable chemoreceptor glutamine deamidase CheD (162 aa).

This sequence belongs to the CheD family.

The catalysed reaction is L-glutaminyl-[protein] + H2O = L-glutamyl-[protein] + NH4(+). Probably deamidates glutamine residues to glutamate on methyl-accepting chemotaxis receptors (MCPs), playing an important role in chemotaxis. The chain is Probable chemoreceptor glutamine deamidase CheD from Pyrococcus horikoshii (strain ATCC 700860 / DSM 12428 / JCM 9974 / NBRC 100139 / OT-3).